The primary structure comprises 264 residues: tRNA (guanine-N(1)-)-methyltransferase (264 aa).

An S-adenosyl-L-methionine-binding site is contributed by 149-154 (IGDYVL).

Belongs to the RNA methyltransferase TrmD family. In terms of assembly, homodimer.

It localises to the cytoplasm. It carries out the reaction guanosine(37) in tRNA + S-adenosyl-L-methionine = N(1)-methylguanosine(37) in tRNA + S-adenosyl-L-homocysteine + H(+). Functionally, specifically methylates guanosine-37 in various tRNAs. This Methylobacillus flagellatus (strain ATCC 51484 / DSM 6875 / VKM B-1610 / KT) protein is tRNA (guanine-N(1)-)-methyltransferase.